Reading from the N-terminus, the 144-residue chain is Large ribosomal subunit protein uL16 (144 aa).

The protein belongs to the universal ribosomal protein uL16 family. Part of the 50S ribosomal subunit.

Binds 23S rRNA and is also seen to make contacts with the A and possibly P site tRNAs. The chain is Large ribosomal subunit protein uL16 from Caldanaerobacter subterraneus subsp. tengcongensis (strain DSM 15242 / JCM 11007 / NBRC 100824 / MB4) (Thermoanaerobacter tengcongensis).